Here is a 216-residue protein sequence, read N- to C-terminus: Lipoprotein signal peptidase (216 aa).

The disordered stretch occupies residues 1–21 (MATSRTAPTRAPSLRSSPALE). A run of 3 helical transmembrane segments spans residues 31-51 (VGAL…DQIT), 89-109 (GSTW…IWYA), and 114-134 (STAW…NLTD). Residues aspartate 149 and aspartate 164 contribute to the active site. A helical membrane pass occupies residues 159 to 179 (IFNLADVAIVFSMGLFLLLTL). A disordered region spans residues 189 to 216 (QRDEGAGVSSASPAGDESAADKPENLSA). A compositionally biased stretch (basic and acidic residues) spans 207 to 216 (AADKPENLSA).

This sequence belongs to the peptidase A8 family.

It localises to the cell membrane. The enzyme catalyses Release of signal peptides from bacterial membrane prolipoproteins. Hydrolyzes -Xaa-Yaa-Zaa-|-(S,diacylglyceryl)Cys-, in which Xaa is hydrophobic (preferably Leu), and Yaa (Ala or Ser) and Zaa (Gly or Ala) have small, neutral side chains.. Its pathway is protein modification; lipoprotein biosynthesis (signal peptide cleavage). In terms of biological role, this protein specifically catalyzes the removal of signal peptides from prolipoproteins. The sequence is that of Lipoprotein signal peptidase from Leifsonia xyli subsp. xyli (strain CTCB07).